A 380-amino-acid chain; its full sequence is Cytochrome b (380 aa).

The next 4 membrane-spanning stretches (helical) occupy residues 34–54 (FGSL…LLAM), 78–99 (WLIR…YLHI), 114–134 (WNTG…GYVL), and 179–199 (FFAL…IHLT). Heme b is bound by residues histidine 84 and histidine 98. The heme b site is built by histidine 183 and histidine 197. Histidine 202 lines the a ubiquinone pocket. Transmembrane regions (helical) follow at residues 227–247 (LKDI…ALFS), 289–309 (LGGV…PFLH), 321–341 (LSQL…WVGS), and 348–368 (FIII…ILFP).

It belongs to the cytochrome b family. The cytochrome bc1 complex contains 11 subunits: 3 respiratory subunits (MT-CYB, CYC1 and UQCRFS1), 2 core proteins (UQCRC1 and UQCRC2) and 6 low-molecular weight proteins (UQCRH/QCR6, UQCRB/QCR7, UQCRQ/QCR8, UQCR10/QCR9, UQCR11/QCR10 and a cleavage product of UQCRFS1). This cytochrome bc1 complex then forms a dimer. Heme b serves as cofactor.

The protein localises to the mitochondrion inner membrane. Functionally, component of the ubiquinol-cytochrome c reductase complex (complex III or cytochrome b-c1 complex) that is part of the mitochondrial respiratory chain. The b-c1 complex mediates electron transfer from ubiquinol to cytochrome c. Contributes to the generation of a proton gradient across the mitochondrial membrane that is then used for ATP synthesis. This is Cytochrome b (MT-CYB) from Macronectes giganteus (Southern giant petrel).